A 347-amino-acid polypeptide reads, in one-letter code: Holliday junction branch migration complex subunit RuvB (347 aa).

The segment at 1 to 183 (MTDVPRMVTP…FGIPVRLNFY (183 aa)) is large ATPase domain (RuvB-L). Residues leucine 22, arginine 23, glycine 64, lysine 67, threonine 68, threonine 69, 130-132 (EDF), arginine 173, tyrosine 183, and arginine 220 each bind ATP. Threonine 68 contributes to the Mg(2+) binding site. Residues 184–254 (TVDELEKIVS…IADHALGALE (71 aa)) form a small ATPAse domain (RuvB-S) region. The head domain (RuvB-H) stretch occupies residues 257 to 347 (AAGLDAMDRR…QFGLFGGEDE (91 aa)). Positions 293, 312, and 317 each coordinate DNA.

Belongs to the RuvB family. In terms of assembly, homohexamer. Forms an RuvA(8)-RuvB(12)-Holliday junction (HJ) complex. HJ DNA is sandwiched between 2 RuvA tetramers; dsDNA enters through RuvA and exits via RuvB. An RuvB hexamer assembles on each DNA strand where it exits the tetramer. Each RuvB hexamer is contacted by two RuvA subunits (via domain III) on 2 adjacent RuvB subunits; this complex drives branch migration. In the full resolvosome a probable DNA-RuvA(4)-RuvB(12)-RuvC(2) complex forms which resolves the HJ.

The protein resides in the cytoplasm. It catalyses the reaction ATP + H2O = ADP + phosphate + H(+). In terms of biological role, the RuvA-RuvB-RuvC complex processes Holliday junction (HJ) DNA during genetic recombination and DNA repair, while the RuvA-RuvB complex plays an important role in the rescue of blocked DNA replication forks via replication fork reversal (RFR). RuvA specifically binds to HJ cruciform DNA, conferring on it an open structure. The RuvB hexamer acts as an ATP-dependent pump, pulling dsDNA into and through the RuvAB complex. RuvB forms 2 homohexamers on either side of HJ DNA bound by 1 or 2 RuvA tetramers; 4 subunits per hexamer contact DNA at a time. Coordinated motions by a converter formed by DNA-disengaged RuvB subunits stimulates ATP hydrolysis and nucleotide exchange. Immobilization of the converter enables RuvB to convert the ATP-contained energy into a lever motion, pulling 2 nucleotides of DNA out of the RuvA tetramer per ATP hydrolyzed, thus driving DNA branch migration. The RuvB motors rotate together with the DNA substrate, which together with the progressing nucleotide cycle form the mechanistic basis for DNA recombination by continuous HJ branch migration. Branch migration allows RuvC to scan DNA until it finds its consensus sequence, where it cleaves and resolves cruciform DNA. This is Holliday junction branch migration complex subunit RuvB from Nitrobacter hamburgensis (strain DSM 10229 / NCIMB 13809 / X14).